Reading from the N-terminus, the 116-residue chain is MANHFRTDRVGMEIKREVNEILQKKVRDPRVQGVTIIDVQMLGDLSVAKVYYTILSNLASDNQKAQIGLEKATGTIKRELGRNLKLYKIPDLTFVKDESIEYGNKIDEMLRNLDKN.

Belongs to the RbfA family. In terms of assembly, monomer. Binds 30S ribosomal subunits, but not 50S ribosomal subunits or 70S ribosomes.

It is found in the cytoplasm. Its function is as follows. One of several proteins that assist in the late maturation steps of the functional core of the 30S ribosomal subunit. Associates with free 30S ribosomal subunits (but not with 30S subunits that are part of 70S ribosomes or polysomes). Required for efficient processing of 16S rRNA. May interact with the 5'-terminal helix region of 16S rRNA. The sequence is that of Ribosome-binding factor A from Streptococcus pneumoniae serotype 4 (strain ATCC BAA-334 / TIGR4).